Reading from the N-terminus, the 628-residue chain is Chaperone protein HtpG (628 aa).

An a; substrate-binding region spans residues 1-334 (MTTIDTASET…SEDLPLNLSR (334 aa)). A b region spans residues 335–550 (EMLQNNPQLA…GFGPDRELEK (216 aa)). Residues 551–628 (MLARANKGAA…LVLRGVVAHG (78 aa)) form a c region.

This sequence belongs to the heat shock protein 90 family. As to quaternary structure, homodimer.

The protein resides in the cytoplasm. Molecular chaperone. Has ATPase activity. In Rhodopseudomonas palustris (strain HaA2), this protein is Chaperone protein HtpG.